Consider the following 503-residue polypeptide: Probable Xaa-Pro aminopeptidase TSTA_094700 (503 aa).

Asp277, Asp288, Glu428, and Glu467 together coordinate Mn(2+).

The protein belongs to the peptidase M24B family. Requires Mn(2+) as cofactor.

It carries out the reaction Release of any N-terminal amino acid, including proline, that is linked to proline, even from a dipeptide or tripeptide.. In terms of biological role, catalyzes the removal of a penultimate prolyl residue from the N-termini of peptides. In Talaromyces stipitatus (strain ATCC 10500 / CBS 375.48 / QM 6759 / NRRL 1006) (Penicillium stipitatum), this protein is Probable Xaa-Pro aminopeptidase TSTA_094700.